Reading from the N-terminus, the 380-residue chain is Cobalt-precorrin-5B C(1)-methyltransferase (380 aa).

This sequence belongs to the CbiD family.

The enzyme catalyses Co-precorrin-5B + S-adenosyl-L-methionine = Co-precorrin-6A + S-adenosyl-L-homocysteine. It participates in cofactor biosynthesis; adenosylcobalamin biosynthesis; cob(II)yrinate a,c-diamide from sirohydrochlorin (anaerobic route): step 6/10. Catalyzes the methylation of C-1 in cobalt-precorrin-5B to form cobalt-precorrin-6A. The chain is Cobalt-precorrin-5B C(1)-methyltransferase from Salinispora tropica (strain ATCC BAA-916 / DSM 44818 / JCM 13857 / NBRC 105044 / CNB-440).